Here is a 431-residue protein sequence, read N- to C-terminus: Magnetosome protein MamH (431 aa).

11 helical membrane-spanning segments follow: residues 21 to 41 (LLSA…PLFL), 57 to 77 (ANVQ…LGYL), 86 to 106 (IIVA…LSPW), 107 to 127 (IGGA…IMSA), 156 to 176 (TAFM…QIPA), 178 to 198 (AGIA…AWLA), 243 to 263 (MVFV…LIKV), 274 to 294 (ILIG…RSFI), 302 to 321 (AVLL…GFII), 358 to 378 (LLGS…IFFV), and 380 to 400 (VGGF…TGVG).

This sequence belongs to the major facilitator superfamily.

Its subcellular location is the magnetosome membrane. In terms of biological role, required for correct biomineralization of the magnetosome; probably transports some form of iron. Partially functionally redundant with MamZ. The polypeptide is Magnetosome protein MamH (mamH) (Paramagnetospirillum magneticum (strain ATCC 700264 / AMB-1) (Magnetospirillum magneticum)).